Here is a 460-residue protein sequence, read N- to C-terminus: Argininosuccinate lyase (460 aa).

It belongs to the lyase 1 family. Argininosuccinate lyase subfamily.

The protein resides in the cytoplasm. The catalysed reaction is 2-(N(omega)-L-arginino)succinate = fumarate + L-arginine. It functions in the pathway amino-acid biosynthesis; L-arginine biosynthesis; L-arginine from L-ornithine and carbamoyl phosphate: step 3/3. This Staphylococcus haemolyticus (strain JCSC1435) protein is Argininosuccinate lyase.